A 205-amino-acid polypeptide reads, in one-letter code: Large ribosomal subunit protein uL4 (205 aa).

The protein belongs to the universal ribosomal protein uL4 family. Part of the 50S ribosomal subunit.

In terms of biological role, one of the primary rRNA binding proteins, this protein initially binds near the 5'-end of the 23S rRNA. It is important during the early stages of 50S assembly. It makes multiple contacts with different domains of the 23S rRNA in the assembled 50S subunit and ribosome. Forms part of the polypeptide exit tunnel. The protein is Large ribosomal subunit protein uL4 of Dinoroseobacter shibae (strain DSM 16493 / NCIMB 14021 / DFL 12).